A 237-amino-acid chain; its full sequence is Ribonuclease 3 (237 aa).

Residues 3–133 form the RNase III domain; that stretch reads SRQPLLDALG…LLGAIYLQHG (131 aa). Position 43 (Glu-43) interacts with Mg(2+). Residue Asp-47 is part of the active site. Residues Asp-119 and Glu-122 each coordinate Mg(2+). Residue Glu-122 is part of the active site. The DRBM domain maps to 160–228; the sequence is DWKTSLQELT…AAATWKALDV (69 aa).

It belongs to the ribonuclease III family. As to quaternary structure, homodimer. The cofactor is Mg(2+).

Its subcellular location is the cytoplasm. It catalyses the reaction Endonucleolytic cleavage to 5'-phosphomonoester.. Functionally, digests double-stranded RNA. Involved in the processing of primary rRNA transcript to yield the immediate precursors to the large and small rRNAs (23S and 16S). Processes some mRNAs, and tRNAs when they are encoded in the rRNA operon. Processes pre-crRNA and tracrRNA of type II CRISPR loci if present in the organism. The sequence is that of Ribonuclease 3 from Mycolicibacterium paratuberculosis (strain ATCC BAA-968 / K-10) (Mycobacterium paratuberculosis).